We begin with the raw amino-acid sequence, 414 residues long: tRNA(Ile)-lysidine synthase (414 aa).

13–18 provides a ligand contact to ATP; that stretch reads SGGIDS.

It belongs to the tRNA(Ile)-lysidine synthase family.

It localises to the cytoplasm. It carries out the reaction cytidine(34) in tRNA(Ile2) + L-lysine + ATP = lysidine(34) in tRNA(Ile2) + AMP + diphosphate + H(+). Its function is as follows. Ligates lysine onto the cytidine present at position 34 of the AUA codon-specific tRNA(Ile) that contains the anticodon CAU, in an ATP-dependent manner. Cytidine is converted to lysidine, thus changing the amino acid specificity of the tRNA from methionine to isoleucine. The protein is tRNA(Ile)-lysidine synthase of Thermotoga sp. (strain RQ2).